We begin with the raw amino-acid sequence, 188 residues long: Large ribosomal subunit protein bL35m (188 aa).

It belongs to the bacterial ribosomal protein bL35 family. Component of the mitochondrial large ribosomal subunit (mt-LSU). Mature mammalian 55S mitochondrial ribosomes consist of a small (28S) and a large (39S) subunit. The 28S small subunit contains a 12S ribosomal RNA (12S mt-rRNA) and 30 different proteins. The 39S large subunit contains a 16S rRNA (16S mt-rRNA), a copy of mitochondrial valine transfer RNA (mt-tRNA(Val)), which plays an integral structural role, and 52 different proteins.

Its subcellular location is the mitochondrion. The polypeptide is Large ribosomal subunit protein bL35m (MRPL35) (Homo sapiens (Human)).